A 518-amino-acid chain; its full sequence is GRIN2-like protein (518 aa).

2 disordered regions span residues 1–23 and 467–500; these read MGLE…QSRT and QTEP…FRTM. The span at 476–494 shows a compositional bias: basic and acidic residues; that stretch reads KSDEDPLNKEPSSDKMEKK.

As to quaternary structure, may interact with GNAO1.

Its function is as follows. May be involved in neurite outgrowth. This is GRIN2-like protein from Gallus gallus (Chicken).